A 341-amino-acid chain; its full sequence is tRNA N6-adenosine threonylcarbamoyltransferase (341 aa).

The Fe cation site is built by H116 and H120. Residues 139–143 (LVSGG), D172, G185, and N274 contribute to the substrate site. D302 provides a ligand contact to Fe cation.

Belongs to the KAE1 / TsaD family. Fe(2+) serves as cofactor.

The protein localises to the cytoplasm. It carries out the reaction L-threonylcarbamoyladenylate + adenosine(37) in tRNA = N(6)-L-threonylcarbamoyladenosine(37) in tRNA + AMP + H(+). Required for the formation of a threonylcarbamoyl group on adenosine at position 37 (t(6)A37) in tRNAs that read codons beginning with adenine. Is involved in the transfer of the threonylcarbamoyl moiety of threonylcarbamoyl-AMP (TC-AMP) to the N6 group of A37, together with TsaE and TsaB. TsaD likely plays a direct catalytic role in this reaction. This Vesicomyosocius okutanii subsp. Calyptogena okutanii (strain HA) protein is tRNA N6-adenosine threonylcarbamoyltransferase.